The primary structure comprises 288 residues: Phosphatidylserine decarboxylase proenzyme (288 aa).

Active-site charge relay system; for autoendoproteolytic cleavage activity residues include D89, H146, and S252. S252 serves as the catalytic Schiff-base intermediate with substrate; via pyruvic acid; for decarboxylase activity. Pyruvic acid (Ser); by autocatalysis is present on S252.

This sequence belongs to the phosphatidylserine decarboxylase family. PSD-B subfamily. Prokaryotic type I sub-subfamily. As to quaternary structure, heterodimer of a large membrane-associated beta subunit and a small pyruvoyl-containing alpha subunit. It depends on pyruvate as a cofactor. Is synthesized initially as an inactive proenzyme. Formation of the active enzyme involves a self-maturation process in which the active site pyruvoyl group is generated from an internal serine residue via an autocatalytic post-translational modification. Two non-identical subunits are generated from the proenzyme in this reaction, and the pyruvate is formed at the N-terminus of the alpha chain, which is derived from the carboxyl end of the proenzyme. The autoendoproteolytic cleavage occurs by a canonical serine protease mechanism, in which the side chain hydroxyl group of the serine supplies its oxygen atom to form the C-terminus of the beta chain, while the remainder of the serine residue undergoes an oxidative deamination to produce ammonia and the pyruvoyl prosthetic group on the alpha chain. During this reaction, the Ser that is part of the protease active site of the proenzyme becomes the pyruvoyl prosthetic group, which constitutes an essential element of the active site of the mature decarboxylase.

The protein localises to the cell membrane. The enzyme catalyses a 1,2-diacyl-sn-glycero-3-phospho-L-serine + H(+) = a 1,2-diacyl-sn-glycero-3-phosphoethanolamine + CO2. It functions in the pathway phospholipid metabolism; phosphatidylethanolamine biosynthesis; phosphatidylethanolamine from CDP-diacylglycerol: step 2/2. Functionally, catalyzes the formation of phosphatidylethanolamine (PtdEtn) from phosphatidylserine (PtdSer). This is Phosphatidylserine decarboxylase proenzyme from Shewanella frigidimarina (strain NCIMB 400).